A 302-amino-acid chain; its full sequence is MSNTTFRPFTGSSRTVVEGEQAGAQDDMSLLQSLFSDKSREEFAKECKLGMYTNLSSNNRLNYIDLVPKNTGSRALNLFKSEYEKGHIPSSGVLSIPRVLVFLVRTTTVTESGSVTIRLVDLISASSVEILEPVDGTQEATIPISSLPAIVCFSPSYDCPMQMIGNRHRCFGLVTQLDGVISSGSTVVMSHAYWSANFRSKPNNYKQYAPMYKYVEPFDRLKRLSRKQLKNYVRGITNQSVNHGYLLGKPLLKTDEQDPEMIVLEEESLTPTDSNGVGKDKIAVTAKSVAGLPTASLSINRR.

It belongs to the bromovirus movement protein family.

The protein resides in the host cell junction. It localises to the host plasmodesma. In terms of biological role, transports viral genome to neighboring plant cells directly through plasmosdesmata, without any budding. The movement protein allows efficient cell to cell propagation, by bypassing the host cell wall barrier. Acts by forming a tubular structure at the host plasmodesmata, enlarging it enough to allow free passage of virion capsids. The chain is Movement protein from Glycine max (Soybean).